A 925-amino-acid chain; its full sequence is MTKNSSTVFTHARIATLEEKAANLGLIEEAALVVKDARIVYAGPENKLPDEYASFEKIDCGNRLITPGLIDCHTHLVHAGNRAHEFELRLQGATYEEVARAGGGIVSSVRNLRAASEDDLVRETLPRLDALIAEGVTTVEVKSGYGLDRDSEIKSLKAARRLGEERDVAIRTTFLGAHALPPEMNGDKAAYIDRVINDMLPAIAEQGLADAVDGFCEGIAFLPDEIARVFDAAKAHDIPVKLHADQLSNLHGAALAASYGALSADHLEYTDADGAAAMASAGTVAVLLPGAYYFIRETQKPPVEAFRAAGTKMALATDNNPGTSPLTSLLLTMNMGATLFRMTVEECIAGVTREAARALGILDQTGTLEIGKDADLAIWDIERPAELVYRIGFNPLWKRVFKGQIKPHVRMEPFMTIILKPGSVPLETLEKIYREGLPVRIDPAFHAGIEKAAARIAEIAAGDAPVYGINTGFGKLASIRIAAGDVATLQRNLILSHCCGVGEPLSENIVRLIMALKLVSLGRGASGVQLEVITLIEAMLEKGVIPMIPEKGSVGASGDLAPLAHMTAAMIGEGEAFYRGERLSGAKALGKAGLKPVVLAAKEGLALINGTQTSTALALAGLFRAHRAARTALITGALSTDAAMGSDAPFHEEIHQLRGHKGQIDAGRALRTLLEGSAIRRSHLEGDQRVQDPYCXRCQPQVDGACLDILRQAARTLEIEANAVTDNPLVLSDGRAVSGGNFHAEPVAFAADQIALAVCEIGAISQRRIALLVDPSLSFGLPAFLARKPGLNSGLMIAEVTSAALMSENKQMAHPASVDSTPTSANQEDHVSMACHGARRLLQMTANLNAIIGIEALTGALGVELRKPLTTSAELAKVIAALRAKVATLEEDRYMADDLKAAAELVADGTLSGVISAGILPDLEA.

Positions Met-1–Phe-414 are imidazolonepropionase. Fe(3+) is bound by residues His-73 and His-75. Positions 73 and 75 each coordinate Zn(2+). 4-imidazolone-5-propanoate is bound by residues Arg-82, Tyr-145, and His-178. Tyr-145 is a binding site for N-formimidoyl-L-glutamate. Residue His-243 participates in Fe(3+) binding. His-243 contacts Zn(2+). Gln-246 contributes to the 4-imidazolone-5-propanoate binding site. Asp-318 lines the Fe(3+) pocket. Asp-318 is a binding site for Zn(2+). Residues Asn-320 and Gly-322 each coordinate N-formimidoyl-L-glutamate. Thr-323 provides a ligand contact to 4-imidazolone-5-propanoate. Residues Met-415–Ala-925 form a histidine ammonia-lyase region. Residues Ala-556–Gly-558 constitute a cross-link (5-imidazolinone (Ala-Gly)). Ser-557 bears the 2,3-didehydroalanine (Ser) mark.

This sequence in the N-terminal section; belongs to the metallo-dependent hydrolases superfamily. HutI family. The protein in the C-terminal section; belongs to the PAL/histidase family. It depends on Zn(2+) as a cofactor. The cofactor is Fe(3+). Contains an active site 4-methylidene-imidazol-5-one (MIO), which is formed autocatalytically by cyclization and dehydration of residues Ala-Ser-Gly.

The protein resides in the cytoplasm. It catalyses the reaction 4-imidazolone-5-propanoate + H2O = N-formimidoyl-L-glutamate. The catalysed reaction is L-histidine = trans-urocanate + NH4(+). It participates in amino-acid degradation; L-histidine degradation into L-glutamate; N-formimidoyl-L-glutamate from L-histidine: step 1/3. It functions in the pathway amino-acid degradation; L-histidine degradation into L-glutamate; N-formimidoyl-L-glutamate from L-histidine: step 3/3. Catalyzes the hydrolytic cleavage of the carbon-nitrogen bond in imidazolone-5-propanoate to yield N-formimidoyl-L-glutamate. It is the third step in the universal histidine degradation pathway. This Brucella melitensis biotype 1 (strain ATCC 23456 / CCUG 17765 / NCTC 10094 / 16M) protein is Bifunctional imidazolonepropionase/histidine ammonia-lyase (hutIH).